Reading from the N-terminus, the 393-residue chain is S-adenosylmethionine synthase (393 aa).

His16 provides a ligand contact to ATP. Residue Asp18 participates in Mg(2+) binding. Glu44 serves as a coordination point for K(+). Residues Glu57 and Gln100 each contribute to the L-methionine site. Positions 100-110 (QSQDIAQGVDK) are flexible loop. ATP is bound by residues 167-169 (DAK), 238-239 (RF), Asp247, 253-254 (RK), Ala270, and Lys274. Residue Asp247 participates in L-methionine binding. Residue Lys278 participates in L-methionine binding.

The protein belongs to the AdoMet synthase family. As to quaternary structure, homotetramer; dimer of dimers. The cofactor is Mg(2+). K(+) serves as cofactor.

It is found in the cytoplasm. It catalyses the reaction L-methionine + ATP + H2O = S-adenosyl-L-methionine + phosphate + diphosphate. It participates in amino-acid biosynthesis; S-adenosyl-L-methionine biosynthesis; S-adenosyl-L-methionine from L-methionine: step 1/1. Catalyzes the formation of S-adenosylmethionine (AdoMet) from methionine and ATP. The overall synthetic reaction is composed of two sequential steps, AdoMet formation and the subsequent tripolyphosphate hydrolysis which occurs prior to release of AdoMet from the enzyme. In Delftia acidovorans (strain DSM 14801 / SPH-1), this protein is S-adenosylmethionine synthase.